Reading from the N-terminus, the 85-residue chain is Large ribosomal subunit protein bL27 (85 aa).

Positions 1–26 (MAHKKGVGSSRNGRDSNPKMLGVKRF) are disordered.

The protein belongs to the bacterial ribosomal protein bL27 family.

The chain is Large ribosomal subunit protein bL27 from Roseiflexus sp. (strain RS-1).